The primary structure comprises 378 residues: Opsin Rh4 (378 aa).

Over Met-1–Met-53 the chain is Extracellular. Residue Asn-6 is glycosylated (N-linked (GlcNAc...) asparagine). A helical membrane pass occupies residues His-54 to Ile-78. Residues Phe-79 to Asn-90 are Cytoplasmic-facing. A helical transmembrane segment spans residues Met-91–Ile-111. At Tyr-112 to Gln-127 the chain is on the extracellular side. A disulfide bridge connects residues Cys-126 and Cys-203. The helical transmembrane segment at Ile-128–Gly-148 threads the bilayer. Topologically, residues Tyr-149–Lys-167 are cytoplasmic. The chain crosses the membrane as a helical span at residues Ala-168–Asp-192. Residues Arg-193–Leu-216 lie on the Extracellular side of the membrane. The helical transmembrane segment at Phe-217–Val-244 threads the bilayer. Topologically, residues Phe-245–Lys-280 are cytoplasmic. The helical transmembrane segment at Ala-281–Ala-304 threads the bilayer. The Extracellular portion of the chain corresponds to Phe-305–Thr-312. A helical transmembrane segment spans residues Pro-313 to Ser-337. Lys-324 is modified (N6-(retinylidene)lysine). Residues His-338–Ala-378 lie on the Cytoplasmic side of the membrane.

Belongs to the G-protein coupled receptor 1 family. Opsin subfamily. Post-translationally, phosphorylated on some or all of the serine and threonine residues present in the C-terminal region.

It is found in the membrane. Functionally, visual pigments are the light-absorbing molecules that mediate vision. They consist of an apoprotein, opsin, covalently linked to cis-retinal. The polypeptide is Opsin Rh4 (Rh4) (Drosophila melanogaster (Fruit fly)).